The sequence spans 180 residues: Bifunctional protein PyrR (180 aa).

A PRPP-binding motif is present at residues 101 to 113 (VILVDDVLYTGRT).

It belongs to the purine/pyrimidine phosphoribosyltransferase family. PyrR subfamily. As to quaternary structure, homodimer and homohexamer; in equilibrium.

The catalysed reaction is UMP + diphosphate = 5-phospho-alpha-D-ribose 1-diphosphate + uracil. Regulates transcriptional attenuation of the pyrimidine nucleotide (pyr) operon by binding in a uridine-dependent manner to specific sites on pyr mRNA. This disrupts an antiterminator hairpin in the RNA and favors formation of a downstream transcription terminator, leading to a reduced expression of downstream genes. Functionally, also displays a weak uracil phosphoribosyltransferase activity which is not physiologically significant. The protein is Bifunctional protein PyrR of Bacillus cereus (strain ATCC 14579 / DSM 31 / CCUG 7414 / JCM 2152 / NBRC 15305 / NCIMB 9373 / NCTC 2599 / NRRL B-3711).